The following is a 237-amino-acid chain: Leucyl/phenylalanyl-tRNA--protein transferase (237 aa).

The protein belongs to the L/F-transferase family.

Its subcellular location is the cytoplasm. It carries out the reaction N-terminal L-lysyl-[protein] + L-leucyl-tRNA(Leu) = N-terminal L-leucyl-L-lysyl-[protein] + tRNA(Leu) + H(+). The enzyme catalyses N-terminal L-arginyl-[protein] + L-leucyl-tRNA(Leu) = N-terminal L-leucyl-L-arginyl-[protein] + tRNA(Leu) + H(+). The catalysed reaction is L-phenylalanyl-tRNA(Phe) + an N-terminal L-alpha-aminoacyl-[protein] = an N-terminal L-phenylalanyl-L-alpha-aminoacyl-[protein] + tRNA(Phe). Functions in the N-end rule pathway of protein degradation where it conjugates Leu, Phe and, less efficiently, Met from aminoacyl-tRNAs to the N-termini of proteins containing an N-terminal arginine or lysine. This chain is Leucyl/phenylalanyl-tRNA--protein transferase, found in Shewanella baltica (strain OS185).